The sequence spans 381 residues: MSTAVQFRGGTTAQHATFTGAAREITVDTDKNTVVVHDGATAGGFPLARHDLVKTAFIKADKSAVAFTRTGNATASIKAGTIVEVNGKLVQFTADTAITMPALTAGTDYAIYVCDDGTVRADSNFSAPTGYTSTTARKVGGFHYAPGSNAAAQAGGNTTAQINEYSLWDIKFRPAALDPRGMTLVAGAFWADIYLLGVNHLTDGTSKYNVTIADGSASPKKSTKFGGDGSAAYSDGAWYNFAEVMTHHGKRLPNYNEFQALAFGTTEATSSGGTDVPTTGVNGTGATSAWNIFTSKWGVVQASGCLWTWGNEFGGVNGASEYTANTGGRGSVYAQPAAALFGGAWNGTSLSGSRAALWYSGPSFSFAFFGARGVCDHLILE.

Homotrimer.

The protein resides in the virion. In terms of biological role, tail fiber protein located at the distal ends of the fibers that binds to the adhesion receptors on the host surface, thereby determining the host range. The phage can alter its tropism by modifying this protein. Variants are expressed through a diversity-generating retroelement (DGR) that creates mutant copies of a template repeat and replaces the end of the tail fiber receptor-binding protein with these sequences, thus changing the host range. Milliards of variants of the fiber receptor-binding protein can be created with this system. The protein is Tail fiber receptor-binding protein of Bordetella phage BPP-1.